The following is a 406-amino-acid chain: Cysteine--tRNA ligase (406 aa).

Cysteine 16 serves as a coordination point for Zn(2+). The short motif at proline 18–asparagine 28 is the 'HIGH' region element. Positions 192, 218, and 222 each coordinate Zn(2+). The 'KMSKS' region motif lies at lysine 250 to serine 254. ATP is bound at residue lysine 253.

Belongs to the class-I aminoacyl-tRNA synthetase family. In terms of assembly, monomer. The cofactor is Zn(2+).

The protein resides in the cytoplasm. The enzyme catalyses tRNA(Cys) + L-cysteine + ATP = L-cysteinyl-tRNA(Cys) + AMP + diphosphate. The polypeptide is Cysteine--tRNA ligase (Mesomycoplasma hyopneumoniae (strain J / ATCC 25934 / NCTC 10110) (Mycoplasma hyopneumoniae)).